The following is a 559-amino-acid chain: O-fucosyltransferase 37 (559 aa).

The chain crosses the membrane as a helical; Signal-anchor for type II membrane protein span at residues 53–73 (FFLLLISLSLVFSGISFLTFS). An N-linked (GlcNAc...) asparagine glycan is attached at Asn-126. 331-333 (HLR) is a substrate binding site. Residues Asn-372, Asn-403, Asn-447, and Asn-504 are each glycosylated (N-linked (GlcNAc...) asparagine).

The protein belongs to the glycosyltransferase GT106 family.

The protein resides in the membrane. It functions in the pathway glycan metabolism. In Arabidopsis thaliana (Mouse-ear cress), this protein is O-fucosyltransferase 37.